The primary structure comprises 436 residues: ATP-dependent protease ATPase subunit HslU (436 aa).

ATP-binding positions include I18, 60-65 (GVGKTE), D249, E314, and R386.

Belongs to the ClpX chaperone family. HslU subfamily. As to quaternary structure, a double ring-shaped homohexamer of HslV is capped on each side by a ring-shaped HslU homohexamer. The assembly of the HslU/HslV complex is dependent on binding of ATP.

Its subcellular location is the cytoplasm. Its function is as follows. ATPase subunit of a proteasome-like degradation complex; this subunit has chaperone activity. The binding of ATP and its subsequent hydrolysis by HslU are essential for unfolding of protein substrates subsequently hydrolyzed by HslV. HslU recognizes the N-terminal part of its protein substrates and unfolds these before they are guided to HslV for hydrolysis. In Chelativorans sp. (strain BNC1), this protein is ATP-dependent protease ATPase subunit HslU.